The primary structure comprises 452 residues: Aspartyl/glutamyl-tRNA(Asn/Gln) amidotransferase subunit B (452 aa).

It belongs to the GatB/GatE family. GatB subfamily. As to quaternary structure, heterotrimer of A, B and C subunits.

The catalysed reaction is L-glutamyl-tRNA(Gln) + L-glutamine + ATP + H2O = L-glutaminyl-tRNA(Gln) + L-glutamate + ADP + phosphate + H(+). It carries out the reaction L-aspartyl-tRNA(Asn) + L-glutamine + ATP + H2O = L-asparaginyl-tRNA(Asn) + L-glutamate + ADP + phosphate + 2 H(+). Its function is as follows. Allows the formation of correctly charged Asn-tRNA(Asn) or Gln-tRNA(Gln) through the transamidation of misacylated Asp-tRNA(Asn) or Glu-tRNA(Gln) in organisms which lack either or both of asparaginyl-tRNA or glutaminyl-tRNA synthetases. The reaction takes place in the presence of glutamine and ATP through an activated phospho-Asp-tRNA(Asn) or phospho-Glu-tRNA(Gln). The protein is Aspartyl/glutamyl-tRNA(Asn/Gln) amidotransferase subunit B of Methanosphaera stadtmanae (strain ATCC 43021 / DSM 3091 / JCM 11832 / MCB-3).